The primary structure comprises 305 residues: Mitochondrial uncoupling protein 3 (305 aa).

Solcar repeat units lie at residues 14–100 (TRIL…LKGL), 112–204 (LPLA…AKHF), and 213–299 (DNIF…FRLL). A run of 6 helical transmembrane segments spans residues 16 to 36 (ILLASLSAMVAESVTFPIDLT), 69 to 89 (VIGLYKGLSPAIIRHLFYTPI), 118 to 138 (ALVGGFSGVIAQVVASPADLV), 178 to 198 (KGVLPNIQRAFLVNMGELACY), 219 to 239 (TLASIMSGLASTSLSCPADVV), and 272 to 292 (WKGFFPTWARLGPWQFVFWVS).

It belongs to the mitochondrial carrier (TC 2.A.29) family.

It localises to the mitochondrion inner membrane. Its function is as follows. PUMPS are mitochondrial transporter proteins that create proton leaks across the inner mitochondrial membrane, thus uncoupling oxidative phosphorylation. This leads to a decrease in the efficiency of oxidative phosphorylation and an increase in heat production. May be involved in protecting plant cells against oxidative stress damage. The sequence is that of Mitochondrial uncoupling protein 3 (PUMP3) from Arabidopsis thaliana (Mouse-ear cress).